Here is an 880-residue protein sequence, read N- to C-terminus: Translation initiation factor IF-2 (880 aa).

3 disordered regions span residues 51–78 (KQHG…GSTG), 93–116 (YVKR…QAAN), and 142–293 (KEAD…FEKP). Residues 69-78 (STLNVKGSTG) are compositionally biased toward polar residues. Positions 142–229 (KEADEKAKKA…ARKKAAEGGD (88 aa)) are enriched in basic and acidic residues. Positions 269–279 (GRRTRRGKKQR) are enriched in basic residues. In terms of domain architecture, tr-type G spans 380–549 (SRAPVVTIMG…LLQAEMLDLS (170 aa)). Positions 389 to 396 (GHVDHGKT) are G1. GTP is bound at residue 389 to 396 (GHVDHGKT). Residues 414–418 (GITQH) form a G2 region. The interval 435 to 438 (DTPG) is G3. GTP is bound by residues 435-439 (DTPGH) and 489-492 (NKID). The G4 stretch occupies residues 489 to 492 (NKID). The tract at residues 525 to 527 (SAK) is G5.

It belongs to the TRAFAC class translation factor GTPase superfamily. Classic translation factor GTPase family. IF-2 subfamily.

Its subcellular location is the cytoplasm. Its function is as follows. One of the essential components for the initiation of protein synthesis. Protects formylmethionyl-tRNA from spontaneous hydrolysis and promotes its binding to the 30S ribosomal subunits. Also involved in the hydrolysis of GTP during the formation of the 70S ribosomal complex. In Psychromonas ingrahamii (strain DSM 17664 / CCUG 51855 / 37), this protein is Translation initiation factor IF-2.